The following is a 164-amino-acid chain: MRPRKRRMVDFEHPERQFRPFSPESEISEEILLTIDELEAMRLSFLENLSQTEAAARMEIHQSTFQRALKKALEKVTDALVHGKAIRIEGGDYRMPRGDRTGPAGQGPAGGGRGRGQGKGRGGRFGGPEGNCICTACGYETPHTPGVSCSQVKCEKCGSPMVRK.

The segment covering 91-100 has biased composition (basic and acidic residues); it reads GDYRMPRGDR. The disordered stretch occupies residues 91-123; it reads GDYRMPRGDRTGPAGQGPAGGGRGRGQGKGRGG. Residues 104–115 are compositionally biased toward gly residues; the sequence is AGQGPAGGGRGR.

Belongs to the UPF0251 family.

This Methanosarcina mazei (strain ATCC BAA-159 / DSM 3647 / Goe1 / Go1 / JCM 11833 / OCM 88) (Methanosarcina frisia) protein is UPF0251 protein MM_1448.